The chain runs to 310 residues: p-hydroxybenzoic acid efflux pump subunit AaeA (310 aa).

Residues 12–32 (AITVVLVILAFIAIFNAWVYY) traverse the membrane as a helical segment.

It belongs to the membrane fusion protein (MFP) (TC 8.A.1) family.

The protein localises to the cell inner membrane. In terms of biological role, forms an efflux pump with AaeB. This is p-hydroxybenzoic acid efflux pump subunit AaeA from Escherichia coli O17:K52:H18 (strain UMN026 / ExPEC).